Reading from the N-terminus, the 143-residue chain is Nucleoside diphosphate kinase (143 aa).

Residues Lys-11, Phe-59, Arg-87, Thr-93, Arg-104, and Asn-114 each coordinate ATP. His-117 functions as the Pros-phosphohistidine intermediate in the catalytic mechanism.

The protein belongs to the NDK family. In terms of assembly, homotetramer. It depends on Mg(2+) as a cofactor.

It localises to the cytoplasm. The enzyme catalyses a 2'-deoxyribonucleoside 5'-diphosphate + ATP = a 2'-deoxyribonucleoside 5'-triphosphate + ADP. The catalysed reaction is a ribonucleoside 5'-diphosphate + ATP = a ribonucleoside 5'-triphosphate + ADP. In terms of biological role, major role in the synthesis of nucleoside triphosphates other than ATP. The ATP gamma phosphate is transferred to the NDP beta phosphate via a ping-pong mechanism, using a phosphorylated active-site intermediate. In Pseudoalteromonas translucida (strain TAC 125), this protein is Nucleoside diphosphate kinase.